We begin with the raw amino-acid sequence, 166 residues long: Monodehydroascorbate reductase, fruit isozyme (166 aa).

The protein belongs to the FAD-dependent oxidoreductase family. FAD serves as cofactor. In terms of processing, the N-terminus is blocked.

The enzyme catalyses 2 monodehydro-L-ascorbate radical + NADH + H(+) = 2 L-ascorbate + NAD(+). Catalyzes the conversion of monodehydroascorbate to ascorbate, oxidizing NADH in the process. The sequence is that of Monodehydroascorbate reductase, fruit isozyme from Cucumis sativus (Cucumber).